Here is a 222-residue protein sequence, read N- to C-terminus: tRNA (guanine-N(1)-)-methyltransferase (222 aa).

S-adenosyl-L-methionine-binding positions include Gly110 and Ile130–Leu135.

This sequence belongs to the RNA methyltransferase TrmD family. As to quaternary structure, homodimer.

It is found in the cytoplasm. The enzyme catalyses guanosine(37) in tRNA + S-adenosyl-L-methionine = N(1)-methylguanosine(37) in tRNA + S-adenosyl-L-homocysteine + H(+). Functionally, specifically methylates guanosine-37 in various tRNAs. The chain is tRNA (guanine-N(1)-)-methyltransferase from Protochlamydia amoebophila (strain UWE25).